Reading from the N-terminus, the 83-residue chain is Mu-theraphotoxin-Hhn2j 3 (83 aa).

A signal peptide spans 1–21 (MKALMFLALAGLVLLFVVGYA). Positions 22–48 (SESEEKEFPIELLSKIFAVDVFKGEER) are excised as a propeptide. 3 disulfide bridges follow: C50-C65, C57-C70, and C64-C77. Position 81 is a leucine amide (L81).

Belongs to the neurotoxin 10 (Hwtx-1) family. 15 (Hntx-3) subfamily. In terms of assembly, monomer. As to expression, expressed by the venom gland.

It is found in the secreted. Its function is as follows. Lethal neurotoxin. Selectively blocks tetrodotoxin-sensitive voltage-gated sodium channels (Nav). Does not affect tetrodotoxin-resistant voltage-gated sodium channels or calcium channels. The chain is Mu-theraphotoxin-Hhn2j 3 from Cyriopagopus hainanus (Chinese bird spider).